The primary structure comprises 444 residues: UDP-N-acetylmuramate--L-alanine ligase (444 aa).

Gly-111–Ser-117 provides a ligand contact to ATP.

It belongs to the MurCDEF family.

The protein localises to the cytoplasm. The catalysed reaction is UDP-N-acetyl-alpha-D-muramate + L-alanine + ATP = UDP-N-acetyl-alpha-D-muramoyl-L-alanine + ADP + phosphate + H(+). Its pathway is cell wall biogenesis; peptidoglycan biosynthesis. Cell wall formation. This is UDP-N-acetylmuramate--L-alanine ligase from Leuconostoc citreum (strain KM20).